The chain runs to 227 residues: Cytochrome c oxidase subunit 2 (227 aa).

Over 1 to 14 the chain is Mitochondrial intermembrane; sequence MAYPFQLGLQDATS. A helical transmembrane segment spans residues 15-45; the sequence is PIMEELMNFHDHTLMIVFLISSLVLYIISLM. Topologically, residues 46–59 are mitochondrial matrix; the sequence is LTTKLTHTSTMDAQ. A helical transmembrane segment spans residues 60–87; sequence EVETIWTILPAAILILIALPSLRILYMM. Residues 88–227 are Mitochondrial intermembrane-facing; sequence DEINNPVLTV…YFENWSASMI (140 aa). Residues His161, Cys196, Glu198, Cys200, His204, and Met207 each coordinate Cu cation. Mg(2+) is bound at residue Glu198.

The protein belongs to the cytochrome c oxidase subunit 2 family. Component of the cytochrome c oxidase (complex IV, CIV), a multisubunit enzyme composed of 14 subunits. The complex is composed of a catalytic core of 3 subunits MT-CO1, MT-CO2 and MT-CO3, encoded in the mitochondrial DNA, and 11 supernumerary subunits COX4I, COX5A, COX5B, COX6A, COX6B, COX6C, COX7A, COX7B, COX7C, COX8 and NDUFA4, which are encoded in the nuclear genome. The complex exists as a monomer or a dimer and forms supercomplexes (SCs) in the inner mitochondrial membrane with NADH-ubiquinone oxidoreductase (complex I, CI) and ubiquinol-cytochrome c oxidoreductase (cytochrome b-c1 complex, complex III, CIII), resulting in different assemblies (supercomplex SCI(1)III(2)IV(1) and megacomplex MCI(2)III(2)IV(2)). Found in a complex with TMEM177, COA6, COX18, COX20, SCO1 and SCO2. Interacts with TMEM177 in a COX20-dependent manner. Interacts with COX20. Interacts with COX16. The cofactor is Cu cation.

The protein resides in the mitochondrion inner membrane. It carries out the reaction 4 Fe(II)-[cytochrome c] + O2 + 8 H(+)(in) = 4 Fe(III)-[cytochrome c] + 2 H2O + 4 H(+)(out). Component of the cytochrome c oxidase, the last enzyme in the mitochondrial electron transport chain which drives oxidative phosphorylation. The respiratory chain contains 3 multisubunit complexes succinate dehydrogenase (complex II, CII), ubiquinol-cytochrome c oxidoreductase (cytochrome b-c1 complex, complex III, CIII) and cytochrome c oxidase (complex IV, CIV), that cooperate to transfer electrons derived from NADH and succinate to molecular oxygen, creating an electrochemical gradient over the inner membrane that drives transmembrane transport and the ATP synthase. Cytochrome c oxidase is the component of the respiratory chain that catalyzes the reduction of oxygen to water. Electrons originating from reduced cytochrome c in the intermembrane space (IMS) are transferred via the dinuclear copper A center (CU(A)) of subunit 2 and heme A of subunit 1 to the active site in subunit 1, a binuclear center (BNC) formed by heme A3 and copper B (CU(B)). The BNC reduces molecular oxygen to 2 water molecules using 4 electrons from cytochrome c in the IMS and 4 protons from the mitochondrial matrix. In Leggadina forresti (Forrest's mouse), this protein is Cytochrome c oxidase subunit 2 (MT-CO2).